Reading from the N-terminus, the 198-residue chain is NAD(P)H dehydrogenase (quinone) (198 aa).

In terms of domain architecture, Flavodoxin-like spans 4-189 (VLVLYYSMYG…SIARYQGEYV (186 aa)). FMN is bound by residues 10–15 (SMYGHI) and 78–80 (TRF). NAD(+) is bound at residue Tyr-12. Trp-98 is a binding site for substrate. Residues 113–118 (STGTGG) and His-133 each bind FMN.

It belongs to the WrbA family. Requires FMN as cofactor.

It catalyses the reaction a quinone + NADH + H(+) = a quinol + NAD(+). The enzyme catalyses a quinone + NADPH + H(+) = a quinol + NADP(+). This chain is NAD(P)H dehydrogenase (quinone), found in Escherichia coli O157:H7.